A 207-amino-acid chain; its full sequence is PITH domain-containing protein P35G2.02 (207 aa).

In terms of domain architecture, PITH spans 13-189; it reads EHPFESGPND…PVVTIYEATP (177 aa).

This sequence belongs to the PITHD1 family.

The protein resides in the cytoplasm. It is found in the nucleus. This is PITH domain-containing protein P35G2.02 from Schizosaccharomyces pombe (strain 972 / ATCC 24843) (Fission yeast).